Consider the following 144-residue polypeptide: Large ribosomal subunit protein uL15 (144 aa).

The segment at 1–57 is disordered; the sequence is MKLNDLSPAPGSRREKHRPGRGIGSGLGKTGGRGHKGQTSRSGGTIAPGFEGGQQPL. Residues 21–31 are compositionally biased toward gly residues; the sequence is RGIGSGLGKTG.

Belongs to the universal ribosomal protein uL15 family. In terms of assembly, part of the 50S ribosomal subunit.

Functionally, binds to the 23S rRNA. This chain is Large ribosomal subunit protein uL15, found in Pseudomonas fluorescens (strain ATCC BAA-477 / NRRL B-23932 / Pf-5).